A 977-amino-acid chain; its full sequence is Monofunctional C1-tetrahydrofolate synthase, mitochondrial (977 aa).

Residues 1 to 31 constitute a mitochondrion transit peptide; that stretch reads MSVRLPLLLRQLGRQQLPSGPACRLRELCRS. The segment at 29-71 is disordered; it reads CRSGSRSSSSGGGDPEGLRGRRLQDGQTFSSHGPGNPEAPGMD. The tract at residues 32–347 is methylenetetrahydrofolate dehydrogenase and cyclohydrolase; sequence GSRSSSSGGG…REQQHRRWRL (316 aa). Position 188 is an N6-acetyllysine; alternate (lysine 188). Residue lysine 188 is modified to N6-succinyllysine; alternate. A formyltetrahydrofolate synthetase region spans residues 348–977; sequence HCLKLQPLSP…TETEQVKGLF (630 aa). Position 356 is a phosphoserine (serine 356). An ATP-binding site is contributed by 422-429; it reads TPLGEGKS. Lysine 595 is subject to N6-succinyllysine.

In the N-terminal section; belongs to the tetrahydrofolate dehydrogenase/cyclohydrolase family. This sequence in the C-terminal section; belongs to the formate--tetrahydrofolate ligase family. Homodimer.

It is found in the mitochondrion. It catalyses the reaction (6S)-5,6,7,8-tetrahydrofolate + formate + ATP = (6R)-10-formyltetrahydrofolate + ADP + phosphate. Its pathway is one-carbon metabolism; tetrahydrofolate interconversion. In terms of biological role, may provide the missing metabolic reaction required to link the mitochondria and the cytoplasm in the mammalian model of one-carbon folate metabolism complementing thus the enzymatic activities of MTHFD2. The sequence is that of Monofunctional C1-tetrahydrofolate synthase, mitochondrial (Mthfd1l) from Mus musculus (Mouse).